Here is a 62-residue protein sequence, read N- to C-terminus: Large ribosomal subunit protein eL24 (62 aa).

Zn(2+)-binding residues include Cys-6, Cys-9, Cys-32, and Cys-36. Residues 6–36 (CSFCEGTIEPGCGKKYVKKDGSVMHFCSSKC) form a C4-type zinc finger.

This sequence belongs to the eukaryotic ribosomal protein eL24 family. Part of the 50S ribosomal subunit. Forms a cluster with proteins L3 and L14. Requires Zn(2+) as cofactor.

Its function is as follows. Binds to the 23S rRNA. In Methanococcus maripaludis (strain C7 / ATCC BAA-1331), this protein is Large ribosomal subunit protein eL24.